The sequence spans 432 residues: Eukaryotic translation initiation factor 3 subunit M (432 aa).

In terms of domain architecture, PCI spans 184–356; it reads EEEEAYQHIL…KVFLIHSVRY (173 aa). Basic and acidic residues-rich tracts occupy residues 392 to 401 and 423 to 432; these read AQQEAERKLV and QHRERNDNDD. The disordered stretch occupies residues 392–432; it reads AQQEAERKLVEASTQHNNDRGNQRRGGNRGQQHRERNDNDD.

This sequence belongs to the eIF-3 subunit M family. Component of the eukaryotic translation initiation factor 3 (eIF-3) complex.

The protein resides in the cytoplasm. In terms of biological role, component of the eukaryotic translation initiation factor 3 (eIF-3) complex, which is involved in protein synthesis of a specialized repertoire of mRNAs and, together with other initiation factors, stimulates binding of mRNA and methionyl-tRNAi to the 40S ribosome. The eIF-3 complex specifically targets and initiates translation of a subset of mRNAs involved in cell proliferation. The polypeptide is Eukaryotic translation initiation factor 3 subunit M (Pyricularia oryzae (strain 70-15 / ATCC MYA-4617 / FGSC 8958) (Rice blast fungus)).